The chain runs to 51 residues: MARVKPLGKKLRMAKAIKQNRRVPPWVVAKTGGRVIDNPKRRHWRRSKLKP.

The protein belongs to the eukaryotic ribosomal protein eL39 family.

This Methanopyrus kandleri (strain AV19 / DSM 6324 / JCM 9639 / NBRC 100938) protein is Large ribosomal subunit protein eL39.